The primary structure comprises 350 residues: Small-conductance mechanosensitive channel MscMJ (350 aa).

5 helical membrane-spanning segments follow: residues 10–30 (ISNI…GKIV), 59–79 (LPII…FLIL), 91–111 (VKVV…DGIF), 130–150 (IIKP…ILTA), and 154–174 (VGYD…ALAL).

It belongs to the MscS (TC 1.A.23) family.

The protein resides in the cell membrane. Small-conductance mechanosensitive channel that opens in response to stretch forces in the membrane lipid bilayer. Exhibits a sixfold preference for cations over anions. Non-rectifying. In Methanocaldococcus jannaschii (strain ATCC 43067 / DSM 2661 / JAL-1 / JCM 10045 / NBRC 100440) (Methanococcus jannaschii), this protein is Small-conductance mechanosensitive channel MscMJ.